The primary structure comprises 1441 residues: MHDYLGSFYNPLTLQKKLKYIHHIIINYITNSILYFFLIMQSKNNPKHNSMKFKEQTESPILNQSKLVNTLDIIKDEINKWEEKNTDKDIKIVSIDNGKIVLSMVYGKQHIIEILCPKDYPNVKSGFSCKEIKTVNTIPLSFISQANNQLKSKKNLSVHRIISHLSTTFQNYKKALKSKVSKDKMKDKSESNSEHEQESKSVVSNEIPSEVSIDSKLTKDINFINDLIKEANKCSNDVPSDSDETHQEVDDRPLTEEVVVPDPTRIVRRRNSKLQTGSTKIKIFGKSKNSGPSSSKTSISSMSKVEELEDKNPYLQEQDIMSIIQDEWNKVQESKSICPTTNEDNNDLDNLINEVERLVQETKDQETKDQETKDQKEIWASSLTIEEPNGENFEEFSWEVPNETSQITVVEPVQEATEEPVQNVTEELIQLVADEPVQETVKDSVQEVAEESVQETTVEAVQEIAEESVQQVVEESVQETTVEPVQEVAEEAVQQVVEESVQETTVEPVQEVAEEPVQQEVAEEPVQQEVAEEPVQQEVAEEPVQEVAEEPVQKATEELVQQEVAEDIVKLDVTVQNDFSDHSDSPEPSDSSDSEEEITNSNNLGRYFKIYDPTTGKTTGVYVGKTPTQAANKAFIKTFSNDNTGNKKEFYLQEYTGNKPGKIYKYEGTRQKLNQPQKISIPLYGDGQYKTITYNYKNTVVKKNVPDSIKNPPKTIKKSIKPVKKSIKPVKKLSTTKLDSQTNSVKEKSENKDIINYNDTGDKYGLYIDFGKFFKNSKIPFDLEKLRDNALKLSNQENQDDNYSTMKLRNFKNNNAVNLMINDFTKLYNDGVKNGYNIEPVNNNIYDLDILLSSNFLDKDSVLYQDMINLKIDHIKINIKINHKMYPFYPPQVSLIRPTIENNVAAIIATIDYLFANKWNPMISIVNIVNDIRNILNKYGALDEKKYQNNLDPIFHDLVELSLLTGTQCSMYQSDQKVIDLSNNSTNEKQSKYWKKGTGFGHSGLSDWDFNQTKENIKNRELKIYQCLRKIVVKLTKIILGKNQVDVINILKESCFIPYLKLVFIDGSLFDLVKDLSYFELVLNSMRILTKEYLPLFLHKYNDKSLLEVLDQFNKDCHSYLNTLKNIKESDCQNEIDIIENFMSFYKRLSTSIEKFNEITESNNKEEVISNDVKDLYKITLGNEVFQEYNLDLNKFANMLTNDTKKEGLIHKDALKAISRELLSHSKNLPVEYGSSIYYRYSPENIRYHEFIITGPEDSPYDSGCFHFRMYNPSAYPNTSPFVSMTTTGHGSVRFNPNLYADGKVCLSILGTWRGQAGESWIPGVSSMLQVMISIQSLVLISEPYFNEPGYESSRGTDKGNKLSTEYNQKVRFNCMKWAMIDVIKNPVPGFESMIKKHFSIKAPHIKQVCQTWINEAPDNNKSEYQKLYDELIGLLDSLVA.

Residues 20-40 (YIHHIIINYITNSILYFFLIM) traverse the membrane as a helical segment. Residues 63–89 (NQSKLVNTLDIIKDEINKWEEKNTDKD) are a coiled coil. Basic and acidic residues predominate over residues 180–199 (VSKDKMKDKSESNSEHEQES). 2 disordered regions span residues 180 to 207 (VSKD…SNEI) and 283 to 305 (IFGK…MSKV). Residues 286–303 (KSKNSGPSSSKTSISSMS) show a composition bias toward low complexity. Residues 340 to 368 (TTNEDNNDLDNLINEVERLVQETKDQETK) adopt a coiled-coil conformation. A compositionally biased stretch (low complexity) spans 505–538 (TVEPVQEVAEEPVQQEVAEEPVQQEVAEEPVQQE). Disordered regions lie at residues 505-554 (TVEP…PVQK) and 577-605 (NDFS…NNLG). Over residues 539 to 549 (VAEEPVQEVAE) the composition is skewed to acidic residues. The UBC core domain occupies 1217-1380 (AISRELLSHS…VRFNCMKWAM (164 aa)). Catalysis depends on C1306, which acts as the Glycyl thioester intermediate.

Belongs to the ubiquitin-conjugating enzyme family.

It localises to the membrane. The catalysed reaction is S-ubiquitinyl-[E1 ubiquitin-activating enzyme]-L-cysteine + [E2 ubiquitin-conjugating enzyme]-L-cysteine = [E1 ubiquitin-activating enzyme]-L-cysteine + S-ubiquitinyl-[E2 ubiquitin-conjugating enzyme]-L-cysteine.. Its pathway is protein modification; protein ubiquitination. Its function is as follows. Catalyzes the covalent attachment of ubiquitin to other proteins. This Acanthamoeba polyphaga (Amoeba) protein is Probable ubiquitin-conjugating enzyme E2 R521.